The chain runs to 431 residues: Tyrosine--tRNA ligase (431 aa).

An L-tyrosine-binding site is contributed by tyrosine 34. Positions 39-48 (PTADSLHIGH) match the 'HIGH' region motif. L-tyrosine-binding residues include tyrosine 171 and glutamine 175. The short motif at 231–235 (KFGKT) is the 'KMSKS' region element. Lysine 234 contributes to the ATP binding site. Positions 353 to 422 (INAVEALVKT…GKYTILRRGK (70 aa)) constitute an S4 RNA-binding domain.

The protein belongs to the class-I aminoacyl-tRNA synthetase family. TyrS type 1 subfamily. In terms of assembly, homodimer.

The protein localises to the cytoplasm. It carries out the reaction tRNA(Tyr) + L-tyrosine + ATP = L-tyrosyl-tRNA(Tyr) + AMP + diphosphate + H(+). Functionally, catalyzes the attachment of tyrosine to tRNA(Tyr) in a two-step reaction: tyrosine is first activated by ATP to form Tyr-AMP and then transferred to the acceptor end of tRNA(Tyr). This chain is Tyrosine--tRNA ligase, found in Neisseria gonorrhoeae (strain ATCC 700825 / FA 1090).